The sequence spans 199 residues: Superoxide dismutase [Mn/Fe] (199 aa).

The Fe(3+) site is built by His-27, His-81, Asp-161, and His-165. Mn(2+) contacts are provided by His-27, His-81, Asp-161, and His-165.

This sequence belongs to the iron/manganese superoxide dismutase family. In terms of assembly, homodimer. Requires Mn(2+) as cofactor. It depends on Fe(3+) as a cofactor.

The catalysed reaction is 2 superoxide + 2 H(+) = H2O2 + O2. Destroys superoxide anion radicals which are normally produced within the cells and which are toxic to biological systems. Catalyzes the dismutation of superoxide anion radicals into O2 and H2O2 by successive reduction and oxidation of the transition metal ion at the active site. This Staphylococcus epidermidis (strain ATCC 35984 / DSM 28319 / BCRC 17069 / CCUG 31568 / BM 3577 / RP62A) protein is Superoxide dismutase [Mn/Fe] (sodA).